We begin with the raw amino-acid sequence, 592 residues long: Transmembrane 9 superfamily member 2 (592 aa).

The N-terminal stretch at Met-1–Ser-24 is a signal peptide. Residues Asp-25 to Trp-229 are Lumenal-facing. Residues Phe-230–Leu-250 form a helical membrane-spanning segment. At Met-251–Gln-302 the chain is on the cytoplasmic side. Residues Leu-303 to Asn-323 form a helical membrane-spanning segment. Arg-324 is a topological domain (lumenal). The helical transmembrane segment at Gly-325–Thr-345 threads the bilayer. Residues Ser-346 to Leu-362 are Cytoplasmic-facing. The chain crosses the membrane as a helical span at residues Leu-363–Val-383. Topologically, residues Ala-384 to Thr-397 are lumenal. The chain crosses the membrane as a helical span at residues Ile-398–Ile-418. The Cytoplasmic segment spans residues Ala-419–Gln-452. The helical transmembrane segment at Met-453–Ala-473 threads the bilayer. Topologically, residues Ser-474 to Ser-485 are lumenal. A helical membrane pass occupies residues Ile-486–Thr-506. Over Tyr-507 to Ser-521 the chain is Cytoplasmic. The chain crosses the membrane as a helical span at residues Phe-522–Ala-542. At Arg-543 to Ser-553 the chain is on the lumenal side. A helical membrane pass occupies residues Phe-554 to Gly-574. Residues Phe-575–Glu-592 lie on the Cytoplasmic side of the membrane. An Endoplasmic reticulum export signal motif is present at residues Phe-581–Tyr-586. Positions Lys-590–Glu-592 match the Golgi retention signal motif.

The protein belongs to the nonaspanin (TM9SF) (TC 9.A.2) family.

It is found in the endosome membrane. The protein resides in the golgi apparatus membrane. This is Transmembrane 9 superfamily member 2 from Arabidopsis thaliana (Mouse-ear cress).